The following is a 124-amino-acid chain: Fluoride-specific ion channel FluC (124 aa).

4 consecutive transmembrane segments (helical) span residues 4–24 (VIFI…LSGW), 32–52 (AFPY…GLIM), 68–88 (GLTI…YETF), and 96–116 (LLIA…FTWL). Na(+)-binding residues include G75 and T78.

It belongs to the fluoride channel Fluc/FEX (TC 1.A.43) family.

Its subcellular location is the cell inner membrane. It catalyses the reaction fluoride(in) = fluoride(out). Its activity is regulated as follows. Na(+) is not transported, but it plays an essential structural role and its presence is essential for fluoride channel function. Its function is as follows. Fluoride-specific ion channel. Important for reducing fluoride concentration in the cell, thus reducing its toxicity. The polypeptide is Fluoride-specific ion channel FluC (Geotalea daltonii (strain DSM 22248 / JCM 15807 / FRC-32) (Geobacter daltonii)).